We begin with the raw amino-acid sequence, 371 residues long: DNA replication and repair protein RecF (371 aa).

Residue Gly-30 to Thr-37 coordinates ATP.

Belongs to the RecF family.

Its subcellular location is the cytoplasm. Functionally, the RecF protein is involved in DNA metabolism; it is required for DNA replication and normal SOS inducibility. RecF binds preferentially to single-stranded, linear DNA. It also seems to bind ATP. This is DNA replication and repair protein RecF from Lacticaseibacillus paracasei (strain ATCC 334 / BCRC 17002 / CCUG 31169 / CIP 107868 / KCTC 3260 / NRRL B-441) (Lactobacillus paracasei).